Reading from the N-terminus, the 151-residue chain is D-aminoacyl-tRNA deacylase (151 aa).

Positions 136–137 match the Gly-cisPro motif, important for rejection of L-amino acids motif; that stretch reads GP.

Belongs to the DTD family. In terms of assembly, homodimer.

It is found in the cytoplasm. It catalyses the reaction glycyl-tRNA(Ala) + H2O = tRNA(Ala) + glycine + H(+). The catalysed reaction is a D-aminoacyl-tRNA + H2O = a tRNA + a D-alpha-amino acid + H(+). Functionally, an aminoacyl-tRNA editing enzyme that deacylates mischarged D-aminoacyl-tRNAs. Also deacylates mischarged glycyl-tRNA(Ala), protecting cells against glycine mischarging by AlaRS. Acts via tRNA-based rather than protein-based catalysis; rejects L-amino acids rather than detecting D-amino acids in the active site. By recycling D-aminoacyl-tRNA to D-amino acids and free tRNA molecules, this enzyme counteracts the toxicity associated with the formation of D-aminoacyl-tRNA entities in vivo and helps enforce protein L-homochirality. The chain is D-aminoacyl-tRNA deacylase from Lactococcus lactis subsp. cremoris (strain MG1363).